Consider the following 64-residue polypeptide: MAKKGTRVVVTLECTEARTSSEPRRSNGISRYTTEKNKRNTTERLELKKFNPHLNKMTIHKEIK.

Positions 16-25 (EARTSSEPRR) are enriched in basic and acidic residues. Residues 16 to 39 (EARTSSEPRRSNGISRYTTEKNKR) form a disordered region.

This sequence belongs to the bacterial ribosomal protein bL33 family.

The chain is Large ribosomal subunit protein bL33 from Prochlorococcus marinus (strain MIT 9515).